The chain runs to 353 residues: tRNA N(3)-cytidine methyltransferase METTL2 (353 aa).

The disordered stretch occupies residues 1–37; the sequence is MAAPVVAADSPVIENMPETAGGATENSAEAQKRPQFG. Residues tryptophan 93, tyrosine 97, glycine 165, aspartate 190, aspartate 216, and isoleucine 237 each contribute to the S-adenosyl-L-methionine site.

Belongs to the methyltransferase superfamily. METL family. In terms of assembly, monomer.

Its subcellular location is the cytoplasm. The catalysed reaction is cytidine(32) in tRNA(Thr) + S-adenosyl-L-methionine = N(3)-methylcytidine(32) in tRNA(Thr) + S-adenosyl-L-homocysteine + H(+). It carries out the reaction cytidine(32) in tRNA(Arg)(CCU) + S-adenosyl-L-methionine = N(3)-methylcytidine(32) in tRNA(Arg)(CCU) + S-adenosyl-L-homocysteine + H(+). Its function is as follows. S-adenosyl-L-methionine-dependent methyltransferase that mediates N(3)-methylcytidine modification of residue 32 of the tRNA anticodon loop of tRNA(Thr)(UGU) and tRNA(Arg)(CCU). N(3)-methylcytidine methylation by mettl2a requires the N6-threonylcarbamoylation of tRNA (t6A37) by the EKC/KEOPS complex as prerequisite. The polypeptide is tRNA N(3)-cytidine methyltransferase METTL2 (mettl2a) (Danio rerio (Zebrafish)).